Reading from the N-terminus, the 60-residue chain is Large ribosomal subunit protein bL32 (60 aa).

Residues 1 to 20 (MAVQKSRKSRSRRDMRRSHH) are compositionally biased toward basic residues. Positions 1–22 (MAVQKSRKSRSRRDMRRSHHRM) are disordered.

The protein belongs to the bacterial ribosomal protein bL32 family.

The sequence is that of Large ribosomal subunit protein bL32 from Psychrobacter arcticus (strain DSM 17307 / VKM B-2377 / 273-4).